A 403-amino-acid polypeptide reads, in one-letter code: Probable tRNA sulfurtransferase (403 aa).

The 106-residue stretch at 60-165 (QLVEERLKPI…KEGVFLSCRT (106 aa)) folds into the THUMP domain. Residues 183–184 (ML), 208–209 (HF), Arg265, Gly287, and Gln296 contribute to the ATP site.

It belongs to the ThiI family.

Its subcellular location is the cytoplasm. It carries out the reaction [ThiI sulfur-carrier protein]-S-sulfanyl-L-cysteine + a uridine in tRNA + 2 reduced [2Fe-2S]-[ferredoxin] + ATP + H(+) = [ThiI sulfur-carrier protein]-L-cysteine + a 4-thiouridine in tRNA + 2 oxidized [2Fe-2S]-[ferredoxin] + AMP + diphosphate. It catalyses the reaction [ThiS sulfur-carrier protein]-C-terminal Gly-Gly-AMP + S-sulfanyl-L-cysteinyl-[cysteine desulfurase] + AH2 = [ThiS sulfur-carrier protein]-C-terminal-Gly-aminoethanethioate + L-cysteinyl-[cysteine desulfurase] + A + AMP + 2 H(+). It participates in cofactor biosynthesis; thiamine diphosphate biosynthesis. In terms of biological role, catalyzes the ATP-dependent transfer of a sulfur to tRNA to produce 4-thiouridine in position 8 of tRNAs, which functions as a near-UV photosensor. Also catalyzes the transfer of sulfur to the sulfur carrier protein ThiS, forming ThiS-thiocarboxylate. This is a step in the synthesis of thiazole, in the thiamine biosynthesis pathway. The sulfur is donated as persulfide by IscS. The sequence is that of Probable tRNA sulfurtransferase from Listeria monocytogenes serotype 4b (strain CLIP80459).